We begin with the raw amino-acid sequence, 342 residues long: Methylthioribose-1-phosphate isomerase (342 aa).

Substrate is bound by residues 44 to 46 (RGA), Arg-85, and Gln-192. The active-site Proton donor is the Asp-233. Residue 243–244 (NK) participates in substrate binding.

It belongs to the eIF-2B alpha/beta/delta subunits family. MtnA subfamily.

The catalysed reaction is 5-(methylsulfanyl)-alpha-D-ribose 1-phosphate = 5-(methylsulfanyl)-D-ribulose 1-phosphate. The protein operates within amino-acid biosynthesis; L-methionine biosynthesis via salvage pathway; L-methionine from S-methyl-5-thio-alpha-D-ribose 1-phosphate: step 1/6. In terms of biological role, catalyzes the interconversion of methylthioribose-1-phosphate (MTR-1-P) into methylthioribulose-1-phosphate (MTRu-1-P). This Caldicellulosiruptor saccharolyticus (strain ATCC 43494 / DSM 8903 / Tp8T 6331) protein is Methylthioribose-1-phosphate isomerase.